A 340-amino-acid chain; its full sequence is Ketol-acid reductoisomerase (NADP(+)) (340 aa).

Residues 1–182 (MRVYYDRDCD…GGGRSGIIET (182 aa)) enclose the KARI N-terminal Rossmann domain. Residues 24–27 (YGSQ), R48, S51, S53, and 83–86 (DELQ) contribute to the NADP(+) site. The active site involves H108. Residue G134 coordinates NADP(+). In terms of domain architecture, KARI C-terminal knotted spans 183-329 (NFREECETDL…AKLREMMPWI (147 aa)). Mg(2+) is bound by residues D191, E195, E227, and E231. Residue S252 participates in substrate binding.

This sequence belongs to the ketol-acid reductoisomerase family. Requires Mg(2+) as cofactor.

It catalyses the reaction (2R)-2,3-dihydroxy-3-methylbutanoate + NADP(+) = (2S)-2-acetolactate + NADPH + H(+). The catalysed reaction is (2R,3R)-2,3-dihydroxy-3-methylpentanoate + NADP(+) = (S)-2-ethyl-2-hydroxy-3-oxobutanoate + NADPH + H(+). It participates in amino-acid biosynthesis; L-isoleucine biosynthesis; L-isoleucine from 2-oxobutanoate: step 2/4. Its pathway is amino-acid biosynthesis; L-valine biosynthesis; L-valine from pyruvate: step 2/4. Involved in the biosynthesis of branched-chain amino acids (BCAA). Catalyzes an alkyl-migration followed by a ketol-acid reduction of (S)-2-acetolactate (S2AL) to yield (R)-2,3-dihydroxy-isovalerate. In the isomerase reaction, S2AL is rearranged via a Mg-dependent methyl migration to produce 3-hydroxy-3-methyl-2-ketobutyrate (HMKB). In the reductase reaction, this 2-ketoacid undergoes a metal-dependent reduction by NADPH to yield (R)-2,3-dihydroxy-isovalerate. This chain is Ketol-acid reductoisomerase (NADP(+)), found in Ruegeria sp. (strain TM1040) (Silicibacter sp.).